We begin with the raw amino-acid sequence, 548 residues long: Kinetochore and Eb1-associated basic protein (548 aa).

Disordered stretches follow at residues 1 to 51 (MSSM…PKHP) and 82 to 181 (YRSS…IRPK). Composition is skewed to basic and acidic residues over residues 20–29 (RTKELLERQR), 104–116 (RTWEGPKTPEFRS), and 127–141 (PRPRRAKELLEDLRS). The segment at 100–253 (QNRQRTWEGP…TTSKRKLDFK (154 aa)) is important for kinetochore and microtubule localization. The segment covering 144–155 (QGTPATKIPSQR) has biased composition (polar residues). Positions 149 to 152 (TKIP) match the SXIP motif 1 motif. Basic and acidic residues predominate over residues 156–165 (NPKENQELSK). The span at 166–175 (SHTCIPSSEP) shows a compositional bias: polar residues. The short motif at 168 to 171 (TCIP) is the SXIP motif 2 element. A CH (calponin-homology)-like region, which is not required for kinetochore and microtubule localization region spans residues 237-372 (SDKGIKLTTS…MCALPVVSEK (136 aa)). Residues 386 to 457 (YDVMSLQQKF…LQLQRLRLQE (72 aa)) adopt a coiled-coil conformation.

In terms of assembly, interacts with Eb1 via the two SxIP motifs; the interaction is not required for kebab kinetochore localization.

The protein resides in the cytoplasm. It is found in the perinuclear region. It localises to the chromosome. Its subcellular location is the centromere. The protein localises to the kinetochore. The protein resides in the cytoskeleton. It is found in the spindle. This chain is Kinetochore and Eb1-associated basic protein, found in Drosophila melanogaster (Fruit fly).